Here is a 21-residue protein sequence, read N- to C-terminus: Thylakoid lumenal 13.8 kDa protein (21 aa).

The protein resides in the plastid. It localises to the chloroplast thylakoid lumen. This chain is Thylakoid lumenal 13.8 kDa protein, found in Spinacia oleracea (Spinach).